We begin with the raw amino-acid sequence, 85 residues long: Large ribosomal subunit protein bL27 (85 aa).

Belongs to the bacterial ribosomal protein bL27 family.

This Pseudomonas fluorescens (strain SBW25) protein is Large ribosomal subunit protein bL27.